A 171-amino-acid polypeptide reads, in one-letter code: uncharacterized protein (171 aa).

The N-terminal stretch at 1–17 (MLKRIIWILFLLGLTWG) is a signal peptide.

In terms of biological role, part of the elfADCG-ycbUVF fimbrial operon, which promotes adhesion of bacteria to different abiotic surfaces. This is an uncharacterized protein from Escherichia coli (strain K12).